The primary structure comprises 317 residues: Spermidine synthase 2 (317 aa).

Residues 27–264 enclose the PABS domain; that stretch reads PGWFSEISPL…GMIGFMLCST (238 aa). Residue Gln-58 coordinates S-adenosyl 3-(methylsulfanyl)propylamine. Tyr-88 lines the putrescine pocket. Residues Gln-89, Asp-113, Glu-133, 164-165, and Asp-183 contribute to the S-adenosyl 3-(methylsulfanyl)propylamine site; that span reads DG. Residue Asp-183 is the Proton acceptor of the active site. Putrescine is bound by residues 183-186 and Tyr-252; that span reads DSSD.

It belongs to the spermidine/spermine synthase family.

It catalyses the reaction S-adenosyl 3-(methylsulfanyl)propylamine + putrescine = S-methyl-5'-thioadenosine + spermidine + H(+). It participates in amine and polyamine biosynthesis; spermidine biosynthesis; spermidine from putrescine: step 1/1. In Datura stramonium (Jimsonweed), this protein is Spermidine synthase 2.